The primary structure comprises 618 residues: Syncytin-B (618 aa).

An N-terminal signal peptide occupies residues 1 to 17; sequence MTGFWVLCFVLFPSSLS. The Extracellular portion of the chain corresponds to 18-545; it reads YPESWMPLVN…SWGQWPDLGR (528 aa). Asparagine 27 carries N-linked (GlcNAc...) asparagine glycosylation. The CXXC signature appears at 44–47; the sequence is CWVC. Cystine bridges form between cysteine 44–cysteine 47, cysteine 44–cysteine 507, and cysteine 499–cysteine 506. Residues asparagine 184, asparagine 274, and asparagine 357 are each glycosylated (N-linked (GlcNAc...) asparagine). Residues 422–442 form a fusion peptide region; the sequence is LFPFLAGLGISSALGTGIAGL. The segment at 482–498 is immunosuppression; it reads LQNRRALDLITAEKGGT. Positions 499 to 507 match the CX6CC motif; the sequence is CLFLQEECC. Residues 546 to 566 form a helical membrane-spanning segment; it reads WLPWLTPFLGPLLFLFFLLTF. Over 567 to 618 the chain is Cytoplasmic; it reads GSCLLNCLTRFVSQRLGSFVQDTAKRHVDSILQNFQYKKLPQDSPDEDTIPT.

It belongs to the gamma type-C retroviral envelope protein family. The mature protein consists of a trimer of SU-TM heterodimers. The SU-TM heterodimers are attached by a labile interchain disulfide bond. Post-translationally, synthesized as an inactive precursor that is heavily N-glycosylated and processed likely by furin in the Golgi to yield the mature SU and TM proteins. The cleavage site between SU and TM requires the minimal sequence [KR]-X-[KR]-R. The CXXC motif is highly conserved across a broad range of retroviral envelope proteins. It is thought to participate in the formation of a labile disulfide bond possibly with the CX6CC motif present in the transmembrane protein. Isomerization of the intersubunit disulfide bond to an SU intrachain disulfide bond is thought to occur upon receptor recognition in order to allow membrane fusion. As to expression, highly expressed in placenta where it localizes to syncytiotrophoblasts of the labyrinthine zona. Specifically localizes to syncytiotrophoblast layer II (SynT-II). Also detected at very low levels in ovary.

The protein localises to the cell membrane. Its function is as follows. This endogenous retroviral envelope protein has retained its original fusogenic properties. Together with Syna, participates in trophoblast fusion and the formation of a syncytium during placenta morphogenesis. Synb is specifically involved in formation of syncytiotrophoblast layer II (SynT-II). Promotes myoblast fusion, and may play a role in regeneration of damaged muscle tissue in males. May have immunosuppressive activity. This chain is Syncytin-B, found in Mus musculus (Mouse).